We begin with the raw amino-acid sequence, 69 residues long: DNA-directed RNA polymerase subunit epsilon (69 aa).

This sequence belongs to the RNA polymerase subunit epsilon family. RNAP is composed of a core of 2 alpha, a beta and a beta' subunit. The core is associated with a delta subunit, and at least one of epsilon or omega. When a sigma factor is associated with the core the holoenzyme is formed, which can initiate transcription.

The catalysed reaction is RNA(n) + a ribonucleoside 5'-triphosphate = RNA(n+1) + diphosphate. A non-essential component of RNA polymerase (RNAP). The sequence is that of DNA-directed RNA polymerase subunit epsilon from Shouchella clausii (strain KSM-K16) (Alkalihalobacillus clausii).